The following is a 388-amino-acid chain: uncharacterized protein (388 aa).

The protein resides in the mitochondrion. This is an uncharacterized protein from Dictyostelium citrinum (Slime mold).